The sequence spans 405 residues: Terminal uridylyltransferase cid1 (405 aa).

Ser90 contacts UTP. Residues Asp101 and Asp103 each contribute to the Mg(2+) site. Residues Ala168, Asn171, Thr172, Lys193, Lys197, Ser211, Tyr212, and His336 each coordinate UTP. The PAP-associated domain maps to 267-336 (SLGSLLHGFF…AIEDPFEISH (70 aa)). Arg340 is an ATP binding site. The interval 377-405 (APIPPRRQKKTDEQSNKKLLNETDGDNSE) is disordered. Residues 386 to 397 (KTDEQSNKKLLN) are compositionally biased toward basic and acidic residues.

It belongs to the DNA polymerase type-B-like family. It depends on Mg(2+) as a cofactor. Mn(2+) serves as cofactor.

The protein localises to the cytoplasm. The catalysed reaction is RNA(n) + UTP = RNA(n)-3'-uridine ribonucleotide + diphosphate. It catalyses the reaction RNA(n) + ATP = RNA(n)-3'-adenine ribonucleotide + diphosphate. In terms of biological role, cytoplasmic uridylyltransferase that mediates the terminal uridylation of mRNAs with short poly(A) tails such as such as act1, hcn1 and urg1 mRNAs, hence facilitating global mRNA decay. Uridylates the 3' ends of actin mRNAs upon S-phase arrest. Also has a weak poly(A) polymerase (PAP) activity. Residue His-336 is responsible for the specificity for UTP. Involved in cell cycle arrest where in association with crb2/rhp9 and chk1 it inhibits unscheduled mitosis. The polypeptide is Terminal uridylyltransferase cid1 (Schizosaccharomyces pombe (strain 972 / ATCC 24843) (Fission yeast)).